A 448-amino-acid polypeptide reads, in one-letter code: Probable protein phosphatase 2C 74 (448 aa).

Residues 1–48 (MGSCLSSSGGGGSRRSLHGSPHVPGPGRRKRPPKRRPGSCSSSFDNTE) form a disordered region. A lipid anchor (N-myristoyl glycine) is attached at G2. Over residues 27-37 (GRRKRPPKRRP) the composition is skewed to basic residues. The region spanning 67–384 (TVSLFSQQGK…DDCAVVCLFL (318 aa)) is the PPM-type phosphatase domain. 4 residues coordinate Mn(2+): D103, G104, D329, and D375. The disordered stretch occupies residues 401-431 (HINNGVTEPEPDTASSSTPDSGTGSPELNGV). Over residues 412 to 426 (DTASSSTPDSGTGSP) the composition is skewed to low complexity.

It belongs to the PP2C family. Interacts with KIN10. Mg(2+) serves as cofactor. Mn(2+) is required as a cofactor. Expressed in the whole plant.

The protein localises to the cell membrane. The enzyme catalyses O-phospho-L-seryl-[protein] + H2O = L-seryl-[protein] + phosphate. It catalyses the reaction O-phospho-L-threonyl-[protein] + H2O = L-threonyl-[protein] + phosphate. Acts as a protein phosphatase. This Arabidopsis thaliana (Mouse-ear cress) protein is Probable protein phosphatase 2C 74.